A 59-amino-acid polypeptide reads, in one-letter code: uncharacterized protein (59 aa).

33–40 lines the ATP pocket; it reads GRRRVGKT.

This is an uncharacterized protein from Methanocaldococcus jannaschii (strain ATCC 43067 / DSM 2661 / JAL-1 / JCM 10045 / NBRC 100440) (Methanococcus jannaschii).